Reading from the N-terminus, the 339-residue chain is UDP-N-acetylenolpyruvoylglucosamine reductase (339 aa).

Residues G18 to V189 enclose the FAD-binding PCMH-type domain. R166 is a catalytic residue. S239 acts as the Proton donor in catalysis. The active site involves E335.

It belongs to the MurB family. The cofactor is FAD.

Its subcellular location is the cytoplasm. It carries out the reaction UDP-N-acetyl-alpha-D-muramate + NADP(+) = UDP-N-acetyl-3-O-(1-carboxyvinyl)-alpha-D-glucosamine + NADPH + H(+). The protein operates within cell wall biogenesis; peptidoglycan biosynthesis. Its function is as follows. Cell wall formation. This is UDP-N-acetylenolpyruvoylglucosamine reductase from Pseudomonas fluorescens (strain ATCC BAA-477 / NRRL B-23932 / Pf-5).